The sequence spans 336 residues: Torsin-1B (336 aa).

The N-terminal stretch at 1-24 (MLRAGWLRGAAALALLLAARVVAA) is a signal peptide. Asn64 carries an N-linked (GlcNAc...) asparagine glycan. An ATP-binding site is contributed by 109 to 116 (GWAGTGKN). A glycan (N-linked (GlcNAc...) asparagine) is linked at Asn165.

This sequence belongs to the ClpA/ClpB family. Torsin subfamily. In terms of assembly, homohexamer. Interacts with TOR1A; the interaction may be specific of neural tissues. Interacts with TOR1AIP1; TOR1AIP1 is required for TOR1B location on the nuclear membrane. Interacts (ATP-bound) with TOR1AIP2; important for endoplasmic reticulum integrity. N-glycosylated. Widely expressed with low levels in brain.

Its subcellular location is the endoplasmic reticulum lumen. The protein resides in the nucleus membrane. The enzyme catalyses ATP + H2O = ADP + phosphate + H(+). Its function is as follows. May serve as a molecular chaperone assisting in the proper folding of secreted and/or membrane proteins. Plays a role in non-neural cells nuclear envelope and endoplasmic reticulum integrity. May have a redundant function with TOR1A in non-neural tissues. The polypeptide is Torsin-1B (TOR1B) (Homo sapiens (Human)).